A 66-amino-acid chain; its full sequence is Cell division protein ZapB (66 aa).

Residues leucine 3 to valine 59 adopt a coiled-coil conformation.

The protein belongs to the ZapB family. In terms of assembly, homodimer. The ends of the coiled-coil dimer bind to each other, forming polymers. Interacts with FtsZ.

It is found in the cytoplasm. Its function is as follows. Non-essential, abundant cell division factor that is required for proper Z-ring formation. It is recruited early to the divisome by direct interaction with FtsZ, stimulating Z-ring assembly and thereby promoting cell division earlier in the cell cycle. Its recruitment to the Z-ring requires functional FtsA or ZipA. The sequence is that of Cell division protein ZapB from Shewanella denitrificans (strain OS217 / ATCC BAA-1090 / DSM 15013).